The chain runs to 422 residues: Serine--tRNA ligase (422 aa).

L-serine is bound at residue 229–231; the sequence is TAE. Residue 260 to 262 participates in ATP binding; sequence RAE. E283 is an L-serine binding site. 347–350 contributes to the ATP binding site; the sequence is EISS. L-serine is bound at residue S383.

The protein belongs to the class-II aminoacyl-tRNA synthetase family. Type-1 seryl-tRNA synthetase subfamily. Homodimer. The tRNA molecule binds across the dimer.

The protein localises to the cytoplasm. It carries out the reaction tRNA(Ser) + L-serine + ATP = L-seryl-tRNA(Ser) + AMP + diphosphate + H(+). The catalysed reaction is tRNA(Sec) + L-serine + ATP = L-seryl-tRNA(Sec) + AMP + diphosphate + H(+). The protein operates within aminoacyl-tRNA biosynthesis; selenocysteinyl-tRNA(Sec) biosynthesis; L-seryl-tRNA(Sec) from L-serine and tRNA(Sec): step 1/1. Its function is as follows. Catalyzes the attachment of serine to tRNA(Ser). Is also able to aminoacylate tRNA(Sec) with serine, to form the misacylated tRNA L-seryl-tRNA(Sec), which will be further converted into selenocysteinyl-tRNA(Sec). The chain is Serine--tRNA ligase from Heliobacterium modesticaldum (strain ATCC 51547 / Ice1).